Reading from the N-terminus, the 877-residue chain is Translation initiation factor IF-2 (877 aa).

The segment covering P66–P115 has biased composition (basic and acidic residues). 3 disordered regions span residues P66–K127, S187–E208, and E241–E290. A compositionally biased stretch (basic residues) spans K192–H201. Residues A245–N265 are compositionally biased toward polar residues. In terms of domain architecture, tr-type G spans Q376–E543. The tract at residues G385–T392 is G1. Residue G385–T392 participates in GTP binding. Residues G410–H414 are G2. Positions D431 to G434 are G3. GTP contacts are provided by residues D431–H435 and N485–D488. The interval N485–D488 is G4. A G5 region spans residues S521–K523.

The protein belongs to the TRAFAC class translation factor GTPase superfamily. Classic translation factor GTPase family. IF-2 subfamily.

The protein localises to the cytoplasm. One of the essential components for the initiation of protein synthesis. Protects formylmethionyl-tRNA from spontaneous hydrolysis and promotes its binding to the 30S ribosomal subunits. Also involved in the hydrolysis of GTP during the formation of the 70S ribosomal complex. This chain is Translation initiation factor IF-2, found in Campylobacter lari (strain RM2100 / D67 / ATCC BAA-1060).